Here is a 323-residue protein sequence, read N- to C-terminus: Acetyl esterase (323 aa).

The Involved in the stabilization of the negatively charged intermediate by the formation of the oxyanion hole motif lies at 91-93 (HGG). Active-site residues include Ser165, Asp262, and His292.

This sequence belongs to the 'GDXG' lipolytic enzyme family. In terms of assembly, homodimer. Interacts with MalT and MelA.

It localises to the cytoplasm. Its function is as follows. Displays esterase activity towards short chain fatty esters (acyl chain length of up to 8 carbons). Able to hydrolyze triacetylglycerol (triacetin) and tributyrylglycerol (tributyrin), but not trioleylglycerol (triolein) or cholesterol oleate. Negatively regulates MalT activity by antagonizing maltotriose binding. Inhibits MelA galactosidase activity. This chain is Acetyl esterase, found in Salmonella agona (strain SL483).